The chain runs to 151 residues: 3-hydroxyacyl-[acyl-carrier-protein] dehydratase FabZ (151 aa).

Residue His49 is part of the active site.

The protein belongs to the thioester dehydratase family. FabZ subfamily.

It is found in the cytoplasm. The enzyme catalyses a (3R)-hydroxyacyl-[ACP] = a (2E)-enoyl-[ACP] + H2O. Involved in unsaturated fatty acids biosynthesis. Catalyzes the dehydration of short chain beta-hydroxyacyl-ACPs and long chain saturated and unsaturated beta-hydroxyacyl-ACPs. This is 3-hydroxyacyl-[acyl-carrier-protein] dehydratase FabZ from Bordetella petrii (strain ATCC BAA-461 / DSM 12804 / CCUG 43448).